An 89-amino-acid polypeptide reads, in one-letter code: Small ribosomal subunit protein uS15 (89 aa).

Belongs to the universal ribosomal protein uS15 family. As to quaternary structure, part of the 30S ribosomal subunit. Forms a bridge to the 50S subunit in the 70S ribosome, contacting the 23S rRNA.

One of the primary rRNA binding proteins, it binds directly to 16S rRNA where it helps nucleate assembly of the platform of the 30S subunit by binding and bridging several RNA helices of the 16S rRNA. In terms of biological role, forms an intersubunit bridge (bridge B4) with the 23S rRNA of the 50S subunit in the ribosome. This chain is Small ribosomal subunit protein uS15, found in Alcanivorax borkumensis (strain ATCC 700651 / DSM 11573 / NCIMB 13689 / SK2).